Here is a 75-residue protein sequence, read N- to C-terminus: MATKKKTFEEAIAELETIVEALENGSASLEDSLDMYQKGIELTKLCQDKLQSAEKRMAKVVTDAGEEIPFEADGE.

This sequence belongs to the XseB family. Heterooligomer composed of large and small subunits.

It is found in the cytoplasm. It carries out the reaction Exonucleolytic cleavage in either 5'- to 3'- or 3'- to 5'-direction to yield nucleoside 5'-phosphates.. Functionally, bidirectionally degrades single-stranded DNA into large acid-insoluble oligonucleotides, which are then degraded further into small acid-soluble oligonucleotides. In Listeria monocytogenes serotype 4b (strain CLIP80459), this protein is Exodeoxyribonuclease 7 small subunit.